We begin with the raw amino-acid sequence, 273 residues long: HMP-PP phosphatase (273 aa).

Asp8 functions as the Nucleophile in the catalytic mechanism. Mg(2+) is bound by residues Asp8, Asp10, and Asp212.

Belongs to the HAD-like hydrolase superfamily. Cof family. Mg(2+) serves as cofactor.

The enzyme catalyses 4-amino-2-methyl-5-(diphosphooxymethyl)pyrimidine + H2O = 4-amino-2-methyl-5-(phosphooxymethyl)pyrimidine + phosphate + H(+). In terms of biological role, catalyzes the hydrolysis of 4-amino-2-methyl-5-hydroxymethylpyrimidine pyrophosphate (HMP-PP) to 4-amino-2-methyl-5-hydroxymethylpyrimidine phosphate (HMP-P). This chain is HMP-PP phosphatase, found in Yersinia pseudotuberculosis serotype I (strain IP32953).